Here is a 205-residue protein sequence, read N- to C-terminus: Large ribosomal subunit protein uL13 (205 aa).

The protein belongs to the universal ribosomal protein uL13 family.

This chain is Large ribosomal subunit protein uL13 (RpL13A), found in Drosophila melanogaster (Fruit fly).